The chain runs to 455 residues: MFNFEKFWQHFNDEMRARFNEVAYNAWFKNTKPISYNQKTHELKIQVQNPVAKGYWEKNLSSQLIQSAYGYAGVELLPVFQISEDSDTPERIVTPEPQHNLQTTPTRAPQREFAKDLKLNEKYTFDNFVQGEGNKLAAGAALAVADSPGSFYNPLFIFGGVGLGKTHLMQAIGHQMLVERPNAKVVYIQSETFVNDFINSIKNKTQDKFREKYRTCDLLLVDDIQFFAKKEGIQEEFFHTFETLYNDQKQIVMTSDRLPTEIPDLSERLVSRFTWGLQVEITPPDLETRIAILRRKAEAEGLTIDDDTLDYIASQVDTNIRELEGALVKVQAYATIEKADIDINLAREALVDLKLVQKNRGLQIPKIQEVVANYFQTSTAELKGKKRVRQIVIPRQIAMYLSRELTDASLPKIGQEFGGKDHTTVMHAYDKIDKQMKTDADIKTAVFDLKQMLEH.

The interval 1–74 (MFNFEKFWQH…IQSAYGYAGV (74 aa)) is domain I, interacts with DnaA modulators. Residues 74-117 (VELLPVFQISEDSDTPERIVTPEPQHNLQTTPTRAPQREFAKDL) are domain II. Residues 118-334 (KLNEKYTFDN…GALVKVQAYA (217 aa)) form a domain III, AAA+ region region. Gly-162, Gly-164, Lys-165, and Thr-166 together coordinate ATP. Residues 335 to 455 (TIEKADIDIN…VFDLKQMLEH (121 aa)) are domain IV, binds dsDNA.

It belongs to the DnaA family. In terms of assembly, oligomerizes as a right-handed, spiral filament on DNA at oriC.

It localises to the cytoplasm. In terms of biological role, plays an essential role in the initiation and regulation of chromosomal replication. ATP-DnaA binds to the origin of replication (oriC) to initiate formation of the DNA replication initiation complex once per cell cycle. Binds the DnaA box (a 9 base pair repeat at the origin) and separates the double-stranded (ds)DNA. Forms a right-handed helical filament on oriC DNA; dsDNA binds to the exterior of the filament while single-stranded (ss)DNA is stabiized in the filament's interior. The ATP-DnaA-oriC complex binds and stabilizes one strand of the AT-rich DNA unwinding element (DUE), permitting loading of DNA polymerase. After initiation quickly degrades to an ADP-DnaA complex that is not apt for DNA replication. Binds acidic phospholipids. The polypeptide is Chromosomal replication initiator protein DnaA (Lactobacillus acidophilus (strain ATCC 700396 / NCK56 / N2 / NCFM)).